Reading from the N-terminus, the 366-residue chain is MISSLHRPTVARVDLEAIRANIDHIHQHIPKKVRTYAVVKANAYGHGAVAVSKAVEDQVDGYCVSNLDEALELRQAGIDKEILILGVILASELQLAIKHQLTITVASLEWLELAKKESVDFSQLHVHVKVDSGMGRIGVRSLAEANQLISILSDMGVQLDGIFTHFATADDSDHAMFDKQLTFFKQLVEQLDKRPALVHASNSATSLWHSETIFNAIRLGIVIYGLNPSGNSLSLPCPLKEALSLESRLVHVKQIQAGDSVGYGASYVAAEPEYVGTLPIGYADGWTRNMQGFKVLVEGEFCDIIGRVSMDQLTIRLPKAYPIGTKVTLIGQQGKQVITATDVADYRGTINYEVLCLLSDRIPREY.

Catalysis depends on Lys40, which acts as the Proton acceptor; specific for D-alanine. An N6-(pyridoxal phosphate)lysine modification is found at Lys40. Residue Arg136 participates in substrate binding. Tyr263 serves as the catalytic Proton acceptor; specific for L-alanine. Met310 contributes to the substrate binding site.

Belongs to the alanine racemase family. The cofactor is pyridoxal 5'-phosphate.

It carries out the reaction L-alanine = D-alanine. It participates in amino-acid biosynthesis; D-alanine biosynthesis; D-alanine from L-alanine: step 1/1. Functionally, catalyzes the interconversion of L-alanine and D-alanine. May also act on other amino acids. This is Alanine racemase (alr) from Streptococcus equi subsp. equi (strain 4047).